The sequence spans 214 residues: Adenylate kinase (214 aa).

ATP is bound at residue 10–15 (GAGKGT). Positions 30–59 (STGDMLRAAVKAGTPLGLEAKKVMDAGQLV) are NMP. AMP contacts are provided by residues threonine 31, arginine 36, 57-59 (QLV), 85-88 (GFPR), and glutamine 92. Residues 122-159 (GRRVHPGSGRVYHVVFNPPKVEGKDDVTGEDLAIRPDD) form an LID region. Residues arginine 123 and 132–133 (VY) contribute to the ATP site. Residues arginine 156 and arginine 167 each coordinate AMP. Glutamine 200 provides a ligand contact to ATP.

Belongs to the adenylate kinase family. In terms of assembly, monomer.

The protein localises to the cytoplasm. It catalyses the reaction AMP + ATP = 2 ADP. It functions in the pathway purine metabolism; AMP biosynthesis via salvage pathway; AMP from ADP: step 1/1. Functionally, catalyzes the reversible transfer of the terminal phosphate group between ATP and AMP. Plays an important role in cellular energy homeostasis and in adenine nucleotide metabolism. The sequence is that of Adenylate kinase from Shewanella putrefaciens (strain CN-32 / ATCC BAA-453).